A 208-amino-acid chain; its full sequence is FMN-dependent NADH:quinone oxidoreductase 2 (208 aa).

17-19 (SVS) provides a ligand contact to FMN.

This sequence belongs to the azoreductase type 1 family. As to quaternary structure, homodimer. It depends on FMN as a cofactor.

It catalyses the reaction 2 a quinone + NADH + H(+) = 2 a 1,4-benzosemiquinone + NAD(+). It carries out the reaction N,N-dimethyl-1,4-phenylenediamine + anthranilate + 2 NAD(+) = 2-(4-dimethylaminophenyl)diazenylbenzoate + 2 NADH + 2 H(+). Functionally, quinone reductase that provides resistance to thiol-specific stress caused by electrophilic quinones. Also exhibits azoreductase activity. Catalyzes the reductive cleavage of the azo bond in aromatic azo compounds to the corresponding amines. In Halalkalibacterium halodurans (strain ATCC BAA-125 / DSM 18197 / FERM 7344 / JCM 9153 / C-125) (Bacillus halodurans), this protein is FMN-dependent NADH:quinone oxidoreductase 2.